Here is a 118-residue protein sequence, read N- to C-terminus: Large ribosomal subunit protein bL19 (118 aa).

The protein belongs to the bacterial ribosomal protein bL19 family.

In terms of biological role, this protein is located at the 30S-50S ribosomal subunit interface and may play a role in the structure and function of the aminoacyl-tRNA binding site. This Aliarcobacter butzleri (strain RM4018) (Arcobacter butzleri) protein is Large ribosomal subunit protein bL19.